Reading from the N-terminus, the 197-residue chain is MFLGGTISTPPASLRLRSTLNPQNAVTQSSSQATFPAAMQRKPPSYSISDEDLESRGFLLRRTTEGLNLDQLNSVFAAVGFPRRDTAKIEVALQHTDALLWVEYEKTRRPVAFARATGDGVFNAIIWDVVVDPSFQSCGLGKAVMERLIEDLQVKGICNIALYSEPRVLGFYRPLGFVSDPDGIKGMVFIRKQRNKK.

The N-terminal 37 residues, 1 to 37, are a transit peptide targeting the chloroplast; that stretch reads MFLGGTISTPPASLRLRSTLNPQNAVTQSSSQATFPA. Polar residues predominate over residues 23-34; that stretch reads QNAVTQSSSQAT. The interval 23–46 is disordered; that stretch reads QNAVTQSSSQATFPAAMQRKPPSY. One can recognise an N-acetyltransferase domain in the interval 58–195; the sequence is FLLRRTTEGL…GMVFIRKQRN (138 aa). Acetyl-CoA-binding positions include 129 to 131, 137 to 142, 165 to 167, and Tyr-172; these read VVV, SCGLGK, and EPR. Tyr-172 serves as the catalytic Proton donor.

It belongs to the acetyltransferase family. GNAT subfamily. In terms of assembly, oligomer. In terms of processing, autoacetylated. In terms of tissue distribution, expressed in green tissues. Accumulates mainly in flowers and young leaves, and, to a lower extent, in stems and mature leaves, but barely in roots.

It is found in the plastid. The protein resides in the chloroplast. It carries out the reaction an N-terminal L-alpha-aminoacyl-[protein] + acetyl-CoA = N-terminal N(alpha)-acetyl-L-alpha-aminoacyl-[protein] + CoA + H(+). The catalysed reaction is L-lysyl-[protein] + acetyl-CoA = N(6)-acetyl-L-lysyl-[protein] + CoA + H(+). The enzyme catalyses 5-methoxytryptamine + acetyl-CoA = melatonin + CoA + H(+). It catalyses the reaction serotonin + acetyl-CoA = N-acetylserotonin + CoA + H(+). Inhibited by 5-methoxytryptamine in vitro. Protein acetyltransferase with dual specificity triggering both N-alpha-acetylation (NTA) and epsilon-lysine acetylation (KA), possibly with a low efficiency or toward specific plastid substrates. Involved in melatonin biosynthesis by catalyzing the formation of N-acetylserotonin (NAS) from serotonin and of melatonin (N-acetyl-5-methoxytryptamine) from 5-methoxytryptamine (5-MT). This Arabidopsis thaliana (Mouse-ear cress) protein is GCN5-related N-acetyltransferase 1, chloroplastic.